Reading from the N-terminus, the 509-residue chain is Circadian clock oscillator protein KaiC (509 aa).

KaiC domains follow at residues 1–243 (MKDK…IIVF) and 257–509 (IRIS…IEKN). Positions 45, 46, 47, 48, 49, 85, 220, 221, 222, 224, 226, 237, 286, 287, 288, 289, 290, and 291 each coordinate ATP. Thr49 contributes to the Mg(2+) binding site. 2 residues coordinate Mg(2+): Thr291 and Glu314. Trp327 serves as a coordination point for ATP. Ser427 carries the phosphoserine; by autocatalysis modification. Residue Thr428 is modified to Phosphothreonine; by autocatalysis. Arg447, Lys453, Met454, Arg455, Ser457, His459, and Lys461 together coordinate ATP.

This sequence belongs to the KaiC family. In terms of assembly, homohexamer; hexamerization is dependent on ATP-binding. Component of the KaiBC complex. KaiC interacts with SasA, activating its autokinase function and leading to RpaA activation. It depends on Mg(2+) as a cofactor. In terms of processing, phosphorylated on serine and threonine residues by autocatalysis. Has a 4 step phosphorylation cycle; the autokinase acts first on Thr-428, then Ser-427. When Ser-427 is modified KaiC switches to an autophosphatase mode, acting first on phospho-Thr-428 then phospho-Ser-427.

The enzyme catalyses L-seryl-[protein] + ATP = O-phospho-L-seryl-[protein] + ADP + H(+). It catalyses the reaction L-threonyl-[protein] + ATP = O-phospho-L-threonyl-[protein] + ADP + H(+). The catalysed reaction is ATP + H2O = ADP + phosphate + H(+). Its function is as follows. Central component of the KaiBC oscillator complex, which constitutes the main circadian regulator in cyanobacteria. Its composition changes during the circadian cycle to control KaiC phosphorylation. Autophosphorylates and has a weak ATPase activity; ATPase activity defines the circadian period. This Prochlorococcus marinus subsp. pastoris (strain CCMP1986 / NIES-2087 / MED4) protein is Circadian clock oscillator protein KaiC.